A 743-amino-acid chain; its full sequence is Envelope glycoprotein H (743 aa).

Positions 1–23 (MRPGLPPYLTVFTVYLLSHLPSQ) are cleaved as a signal peptide. The Virion surface portion of the chain corresponds to 24 to 720 (RYGADAASEA…VVDATDSRLL (697 aa)). N-linked (GlcNAc...) asparagine; by host glycans are attached at residues asparagine 56, asparagine 63, asparagine 68, and asparagine 193. Residues 218 to 281 (YLMDELRYVK…QTEKHELLVL (64 aa)) form an interaction with gL region. Asparagine 642 and asparagine 701 each carry an N-linked (GlcNAc...) asparagine; by host glycan. A helical membrane pass occupies residues 721–741 (MMSVYALSAIIGIYLLYRMLK). Topologically, residues 742 to 743 (TC) are intravirion.

This sequence belongs to the herpesviridae glycoprotein H family. In terms of assembly, interacts with glycoprotein L (gL); this interaction is necessary for the correct processing and cell surface expression of gH. The heterodimer gH/gL seems to interact with gB trimers during fusion. Forms the envelope pentamer complex (PC) composed of gH, gL, UL128, UL130, and UL131A. The pentamer interacts with host NRP2. Forms the envelope trimer complex composed of gH, gL, and gO. The trimer interacts with host PDGFRA. The trimer also interacts with host EPHA2. Interacts with UL116. N-glycosylated, O-glycosylated, and sialylated.

Its subcellular location is the virion membrane. It localises to the host cell membrane. The protein localises to the host endosome membrane. Its function is as follows. The heterodimer glycoprotein H-glycoprotein L is required for the fusion of viral and plasma membranes leading to virus entry into the host cell. Following initial binding to host receptor, membrane fusion is mediated by the fusion machinery composed of gB and the heterodimer gH/gL. May also be involved in the fusion between the virion envelope and the outer nuclear membrane during virion morphogenesis. In human cytomegalovirus, forms two distincts complexes to mediate viral entry, a trimer and a pentamer at the surface of the virion envelope. The gH-gL-gO trimer is required for infection in fibroblasts by interacting with host PDGFRA, and in glioblastoma cells by interacting with host EPHA2. The gH-gL-UL128-UL130-UL131A pentamer is essential for viral entry in epithelial, endothelial and myeloid cells via interaction with host NRP2. The chain is Envelope glycoprotein H from Human cytomegalovirus (strain AD169) (HHV-5).